A 357-amino-acid polypeptide reads, in one-letter code: UDP-N-acetylglucosamine--N-acetylmuramyl-(pentapeptide) pyrophosphoryl-undecaprenol N-acetylglucosamine transferase (357 aa).

Residues 14–16, Asn125, Ser190, and Gln290 each bind UDP-N-acetyl-alpha-D-glucosamine; that span reads SGG.

This sequence belongs to the glycosyltransferase 28 family. MurG subfamily.

Its subcellular location is the cell inner membrane. The enzyme catalyses di-trans,octa-cis-undecaprenyl diphospho-N-acetyl-alpha-D-muramoyl-L-alanyl-D-glutamyl-meso-2,6-diaminopimeloyl-D-alanyl-D-alanine + UDP-N-acetyl-alpha-D-glucosamine = di-trans,octa-cis-undecaprenyl diphospho-[N-acetyl-alpha-D-glucosaminyl-(1-&gt;4)]-N-acetyl-alpha-D-muramoyl-L-alanyl-D-glutamyl-meso-2,6-diaminopimeloyl-D-alanyl-D-alanine + UDP + H(+). It participates in cell wall biogenesis; peptidoglycan biosynthesis. Cell wall formation. Catalyzes the transfer of a GlcNAc subunit on undecaprenyl-pyrophosphoryl-MurNAc-pentapeptide (lipid intermediate I) to form undecaprenyl-pyrophosphoryl-MurNAc-(pentapeptide)GlcNAc (lipid intermediate II). This Chlamydia felis (strain Fe/C-56) (Chlamydophila felis) protein is UDP-N-acetylglucosamine--N-acetylmuramyl-(pentapeptide) pyrophosphoryl-undecaprenol N-acetylglucosamine transferase.